The sequence spans 356 residues: AT-hook motif nuclear-localized protein 1 (356 aa).

Residues 1-127 (MVLNMESTGE…PSHLPPPSSH (127 aa)) form a disordered region. Residues 49-66 (VTPPPPQPSSHHTAPPPL) are compositionally biased toward pro residues. Residues 88-97 (MKKKRGRPRK) show a composition bias toward basic residues. The short motif at 89–97 (KKKRGRPRK) is the Bipartite nuclear localization signal element. Residues 89–101 (KKKRGRPRKYGPD) constitute a DNA-binding region (a.T hook). Positions 106–118 (ALSPKPISSAPAP) are enriched in low complexity. Residues 167–309 (GGNFTPHIIT…KHDFMLSSPT (143 aa)) enclose the PPC domain. A required for nuclear localization region spans residues 270–287 (GLLVAASPVQVVVGSFLA). Positions 295 to 302 (KPKKNKHD) match the Nuclear localization signal motif.

Its subcellular location is the nucleus. The protein localises to the nucleoplasm. It is found in the chromosome. Transcription factor that specifically binds AT-rich DNA sequences related to the nuclear matrix attachment regions (MARs). May play a function in the positioning of chromatin fibers within the nucleus. This chain is AT-hook motif nuclear-localized protein 1, found in Arabidopsis thaliana (Mouse-ear cress).